A 153-amino-acid chain; its full sequence is Transcription antitermination protein NusB (153 aa).

The protein belongs to the NusB family.

Its function is as follows. Involved in transcription antitermination. Required for transcription of ribosomal RNA (rRNA) genes. Binds specifically to the boxA antiterminator sequence of the ribosomal RNA (rrn) operons. This is Transcription antitermination protein NusB from Beutenbergia cavernae (strain ATCC BAA-8 / DSM 12333 / CCUG 43141 / JCM 11478 / NBRC 16432 / NCIMB 13614 / HKI 0122).